The primary structure comprises 61 residues: Small ribosomal subunit protein uS14 (61 aa).

Cys24, Cys27, Cys40, and Cys43 together coordinate Zn(2+).

It belongs to the universal ribosomal protein uS14 family. Zinc-binding uS14 subfamily. Part of the 30S ribosomal subunit. Contacts proteins S3 and S10. Requires Zn(2+) as cofactor.

In terms of biological role, binds 16S rRNA, required for the assembly of 30S particles and may also be responsible for determining the conformation of the 16S rRNA at the A site. The sequence is that of Small ribosomal subunit protein uS14 from Geotalea daltonii (strain DSM 22248 / JCM 15807 / FRC-32) (Geobacter daltonii).